A 592-amino-acid chain; its full sequence is Protein phosphatase EYA1 (592 aa).

2 disordered regions span residues 1-95 and 240-320; these read MEMQ…RPYP and MTSS…PDSD. A compositionally biased stretch (low complexity) spans 8–26; the sequence is SPHSRLSGSSESPSGPKLG. A compositionally biased stretch (polar residues) spans 28-63; that stretch reads SHINSNSMTPNGTEVKTEPMSSSETASTTADGSLNN. 2 stretches are compositionally biased toward low complexity: residues 64-75 and 241-253; these read FSGSAIGSSSFS and TSSNTSPTTPSTN. The span at 254 to 287 shows a compositional bias: polar residues; that stretch reads ATYQLQEPPSGITSQAVTDPTAEYSTIHSPSTPI. The span at 288–303 shows a compositional bias: basic and acidic residues; sequence KDSDSDRLRRGSDGKS. Residue Asp328 is the Nucleophile of the active site. 3 residues coordinate Mg(2+): Asp328, Asp330, and Asp556. Asp330 functions as the Proton donor in the catalytic mechanism.

The protein belongs to the HAD-like hydrolase superfamily. EYA family. Probably interacts with SIX2, SIX4 and SIX5. Interacts with H2AX in response to DNA damage. Interacts with SIX3; promotes EYA1 translocation to the nucleus. Mg(2+) serves as cofactor. In terms of processing, sumoylated with SUMO1. In terms of tissue distribution, in the embryo, highly expressed in kidney with lower levels in brain. Weakly expressed in lung. In the adult, highly expressed in heart and skeletal muscle. Weakly expressed in brain and liver. No expression in eye or kidney.

Its subcellular location is the cytoplasm. The protein localises to the nucleus. The catalysed reaction is O-phospho-L-tyrosyl-[protein] + H2O = L-tyrosyl-[protein] + phosphate. It catalyses the reaction O-phospho-L-seryl-[protein] + H2O = L-seryl-[protein] + phosphate. It carries out the reaction O-phospho-L-threonyl-[protein] + H2O = L-threonyl-[protein] + phosphate. Its function is as follows. Functions both as protein phosphatase and as transcriptional coactivator for SIX1, and probably also for SIX2, SIX4 and SIX5. Tyrosine phosphatase that dephosphorylates 'Tyr-142' of histone H2AX (H2AXY142ph) and promotes efficient DNA repair via the recruitment of DNA repair complexes containing MDC1. 'Tyr-142' phosphorylation of histone H2AX plays a central role in DNA repair and acts as a mark that distinguishes between apoptotic and repair responses to genotoxic stress. Its function as histone phosphatase may contribute to its function in transcription regulation during organogenesis. Also has phosphatase activity with proteins phosphorylated on Ser and Thr residues (in vitro). Required for normal embryonic development of the craniofacial and trunk skeleton, kidneys and ears. Together with SIX1, it plays an important role in hypaxial muscle development; in this it is functionally redundant with EYA2. The protein is Protein phosphatase EYA1 (EYA1) of Homo sapiens (Human).